A 277-amino-acid polypeptide reads, in one-letter code: Large ribosomal subunit protein uL2 (277 aa).

Residues 219–277 (TVRGSVMNPNDHPHGGGEGKAPVGRKAPSTPWGKPALGLKTRNKKAKSDKLIVRRRNEK) form a disordered region. The segment covering 264-277 (AKSDKLIVRRRNEK) has biased composition (basic and acidic residues).

Belongs to the universal ribosomal protein uL2 family. As to quaternary structure, part of the 50S ribosomal subunit. Forms a bridge to the 30S subunit in the 70S ribosome.

In terms of biological role, one of the primary rRNA binding proteins. Required for association of the 30S and 50S subunits to form the 70S ribosome, for tRNA binding and peptide bond formation. It has been suggested to have peptidyltransferase activity; this is somewhat controversial. Makes several contacts with the 16S rRNA in the 70S ribosome. This Streptococcus pneumoniae serotype 2 (strain D39 / NCTC 7466) protein is Large ribosomal subunit protein uL2.